A 446-amino-acid polypeptide reads, in one-letter code: Nuclear distribution protein nudF (446 aa).

The region spanning 9–41 is the LisH domain; sequence QAEELHKSMVAYLSSIKASQSSNTLREELGIGD. Residues 60–86 are a coiled coil; the sequence is TGIARLQRKILDLESKITSLQAELDSV. WD repeat units follow at residues 113 to 154, 156 to 196, 200 to 240, 243 to 282, 285 to 345, 347 to 386, 391 to 430, and 432 to 446; these read SHRD…RTLK, HMRG…ANIR, GHDH…CVRT, SNSI…PRAA, GHDN…IKTL, GHDN…RLVK, AHGH…PAFQ, and VIAT…RVFK.

The protein belongs to the WD repeat LIS1/nudF family. Self-associates. Interacts with nudE and dynein.

It localises to the cytoplasm. Its subcellular location is the cytoskeleton. It is found in the spindle pole. Its function is as follows. Positively regulates the activity of the minus-end directed microtubule motor protein dynein. May enhance dynein-mediated microtubule sliding by targeting dynein to the microtubule plus end. Required for nuclear migration during vegetative growth as well as development. Required for retrograde early endosome (EE) transport from the hyphal tip. Required for localization of dynein to the mitotic spindle poles. Recruits additional proteins to the dynein complex at SPBs. In Aspergillus terreus (strain NIH 2624 / FGSC A1156), this protein is Nuclear distribution protein nudF.